The sequence spans 191 residues: Ribonuclease M5 (191 aa).

The Toprim domain maps to 8 to 91; that stretch reads HEFIVVEGRD…AFINRQDALP (84 aa). 3 residues coordinate Mg(2+): glutamate 14, aspartate 60, and aspartate 62.

Belongs to the ribonuclease M5 family. The cofactor is Mg(2+).

It localises to the cytoplasm. It catalyses the reaction Endonucleolytic cleavage of RNA, removing 21 and 42 nucleotides, respectively, from the 5'- and 3'-termini of a 5S-rRNA precursor.. In terms of biological role, required for correct processing of both the 5' and 3' ends of 5S rRNA precursor. Cleaves both sides of a double-stranded region yielding mature 5S rRNA in one step. The protein is Ribonuclease M5 of Listeria monocytogenes serovar 1/2a (strain ATCC BAA-679 / EGD-e).